A 394-amino-acid chain; its full sequence is Elongation factor Tu (394 aa).

The region spanning 10–205 (KPHVNIGTIG…VDTWIPLPPR (196 aa)) is the tr-type G domain. The tract at residues 19-26 (GHVDHGKT) is G1. Position 19–26 (19–26 (GHVDHGKT)) interacts with GTP. T26 provides a ligand contact to Mg(2+). Positions 60-64 (GITIN) are G2. Positions 81–84 (DCPG) are G3. Residues 81–85 (DCPGH) and 136–139 (NKCD) each bind GTP. Residues 136 to 139 (NKCD) form a G4 region. The G5 stretch occupies residues 174–176 (SAL).

The protein belongs to the TRAFAC class translation factor GTPase superfamily. Classic translation factor GTPase family. EF-Tu/EF-1A subfamily. Monomer.

It is found in the cytoplasm. It carries out the reaction GTP + H2O = GDP + phosphate + H(+). In terms of biological role, GTP hydrolase that promotes the GTP-dependent binding of aminoacyl-tRNA to the A-site of ribosomes during protein biosynthesis. This chain is Elongation factor Tu, found in Bacteroides fragilis (strain ATCC 25285 / DSM 2151 / CCUG 4856 / JCM 11019 / LMG 10263 / NCTC 9343 / Onslow / VPI 2553 / EN-2).